The sequence spans 165 residues: Mid1-interacting protein 1-like (165 aa).

The interval 46–67 is disordered; it reads DQESHASVSHNNNNNNEPSFPN.

Belongs to the SPOT14 family.

The protein localises to the nucleus. It is found in the cytoplasm. The protein resides in the cytoskeleton. In terms of biological role, involved in stabilization of microtubules. May play a role in the regulation of lipogenesis. The sequence is that of Mid1-interacting protein 1-like from Danio rerio (Zebrafish).